The following is a 283-amino-acid chain: Bifunctional protein FolD (283 aa).

Residues 163-165 (GRS), S188, and I229 contribute to the NADP(+) site.

Belongs to the tetrahydrofolate dehydrogenase/cyclohydrolase family. As to quaternary structure, homodimer.

The catalysed reaction is (6R)-5,10-methylene-5,6,7,8-tetrahydrofolate + NADP(+) = (6R)-5,10-methenyltetrahydrofolate + NADPH. It carries out the reaction (6R)-5,10-methenyltetrahydrofolate + H2O = (6R)-10-formyltetrahydrofolate + H(+). It functions in the pathway one-carbon metabolism; tetrahydrofolate interconversion. Catalyzes the oxidation of 5,10-methylenetetrahydrofolate to 5,10-methenyltetrahydrofolate and then the hydrolysis of 5,10-methenyltetrahydrofolate to 10-formyltetrahydrofolate. The polypeptide is Bifunctional protein FolD (Campylobacter concisus (strain 13826)).